The primary structure comprises 358 residues: Histamine H2 receptor (358 aa).

The Extracellular portion of the chain corresponds to 1–22 (MEPNGTVHSCCLDSMALKVTIS). A glycan (N-linked (GlcNAc...) asparagine) is linked at Asn4. A helical transmembrane segment spans residues 23–44 (VVLTTLILITIAGNVVVCLAVS). Topologically, residues 45-57 (LNRRLRSLTNCFI) are cytoplasmic. The chain crosses the membrane as a helical span at residues 58–81 (VSLAATDLLLGLLVLPFSAIYQLS). At 82-92 (FTWSFGHVFCN) the chain is on the extracellular side. Cys91 and Cys173 form a disulfide bridge. Residues 93-114 (IYTSLDVMLCTASILNLFMISL) form a helical membrane-spanning segment. At 115–134 (DRYCAVTDPLRYPVLVTPVR) the chain is on the cytoplasmic side. The helical transmembrane segment at 135–159 (VAISLVFIWVISITLSFLSIHLGWN) threads the bilayer. Over 160–179 (SRNGTRGGNDTFKCKVQVNE) the chain is Extracellular. A helical transmembrane segment spans residues 180 to 203 (VYGLVDGLVTFYLPLLIMCVTYYR). The Cytoplasmic portion of the chain corresponds to 204-233 (IFKIAREQAKRINHISSWKAATIREHKATV). A helical transmembrane segment spans residues 234-257 (TLAAVMGAFIICWFPYFTAFVYRG). At 258-266 (LRGDDAINE) the chain is on the extracellular side. The helical transmembrane segment at 267–288 (AVEGIVLWLGYANSALNPILYA) threads the bilayer. Topologically, residues 289–358 (ALNRDFRTAY…LTHPQGNPIR (70 aa)) are cytoplasmic. Cys304 carries the S-palmitoyl cysteine lipid modification.

It belongs to the G-protein coupled receptor 1 family.

It is found in the cell membrane. The H2 subclass of histamine receptors mediates gastric acid secretion. The activity of this receptor is mediated by G proteins which activate adenylyl cyclase. The polypeptide is Histamine H2 receptor (Hrh2) (Rattus norvegicus (Rat)).